Here is a 1103-residue protein sequence, read N- to C-terminus: Isoleucine--tRNA ligase (1103 aa).

The short motif at 53–63 (PFANGLPHYGH) is the 'HIGH' region element. Positions 628 to 632 (KLSKR) match the 'KMSKS' region motif. K631 is a binding site for ATP.

It belongs to the class-I aminoacyl-tRNA synthetase family. IleS type 2 subfamily. In terms of assembly, monomer. The cofactor is Zn(2+).

Its subcellular location is the cytoplasm. The enzyme catalyses tRNA(Ile) + L-isoleucine + ATP = L-isoleucyl-tRNA(Ile) + AMP + diphosphate. Its function is as follows. Catalyzes the attachment of isoleucine to tRNA(Ile). As IleRS can inadvertently accommodate and process structurally similar amino acids such as valine, to avoid such errors it has two additional distinct tRNA(Ile)-dependent editing activities. One activity is designated as 'pretransfer' editing and involves the hydrolysis of activated Val-AMP. The other activity is designated 'posttransfer' editing and involves deacylation of mischarged Val-tRNA(Ile). This chain is Isoleucine--tRNA ligase, found in Rickettsia akari (strain Hartford).